The following is an 821-amino-acid chain: Ribonuclease R (821 aa).

The RNB domain occupies 267–593 (RVDLRALPLV…LLHRAIKYLI (327 aa)). The S1 motif domain maps to 652–733 (GEELEGVVAN…DDRQIDFELV (82 aa)). Residues 739-821 (LRGQGKTAKK…KSGKVRDKTK (83 aa)) form a disordered region. Basic and acidic residues-rich tracts occupy residues 748-764 (KRAD…KEAA) and 774-794 (TKSE…EGRS). Residues 795-814 (KPKKTKAPKKRKDQARKKSG) show a composition bias toward basic residues.

The protein belongs to the RNR ribonuclease family. RNase R subfamily.

The protein resides in the cytoplasm. It carries out the reaction Exonucleolytic cleavage in the 3'- to 5'-direction to yield nucleoside 5'-phosphates.. 3'-5' exoribonuclease that releases 5'-nucleoside monophosphates and is involved in maturation of structured RNAs. In Vibrio cholerae serotype O1 (strain ATCC 39315 / El Tor Inaba N16961), this protein is Ribonuclease R.